The chain runs to 342 residues: MAPSLETPESIDDVFANPIKQKPQLVAPEPQNCVGPDSQQAGKADSCAGCPNQAICASAPKGPDPDIPVISARLENVKHKILVLSGKGGVGKSTFTSLLAHAFATNPDSNVGIMDTDICGPSIPKMMGVEGETVHVSGTGWSPIWVMDNLAVMSIQFLLPNRDDAVIWRGPKKNGLIKQFLKDVEWGDLDFLLVDTPPGTSDEHLSVNSFLKGSGIDGAVMVTTPQEVSLLDVRKEIDFCRKAGIKILGLAENMSGFVCPKCSNESQIFKASTGGGRALAEEMDIPFLGSVPLDPRIRMACDYGESYFDSFPDSPACLAFQGVVKNLAMQLGLDSQDVLPDE.

The [4Fe-4S] cluster site is built by Cys-33, Cys-47, Cys-50, and Cys-56. Residue 86–93 participates in ATP binding; sequence GKGGVGKS. [4Fe-4S] cluster contacts are provided by Cys-259 and Cys-262.

The protein belongs to the Mrp/NBP35 ATP-binding proteins family. NUBP1/NBP35 subfamily. Heterotetramer of 2 NBP35 and 2 CFD1 chains. The cofactor is [4Fe-4S] cluster.

The protein localises to the cytoplasm. Functionally, component of the cytosolic iron-sulfur (Fe/S) protein assembly (CIA) machinery. Required for maturation of extramitochondrial Fe-S proteins. The NBP35-CFD1 heterotetramer forms a Fe-S scaffold complex, mediating the de novo assembly of an Fe-S cluster and its transfer to target apoproteins. This is Cytosolic Fe-S cluster assembly factor NBP35 from Gibberella zeae (strain ATCC MYA-4620 / CBS 123657 / FGSC 9075 / NRRL 31084 / PH-1) (Wheat head blight fungus).